The sequence spans 154 residues: Histone H2B.5 (154 aa).

Basic and acidic residues predominate over residues 1 to 25 (MAPKAEKKPAAKKVAEEEPSEKAAP). Residues 1-62 (MAPKAEKKPA…DKKGRKKAKK (62 aa)) are disordered. N6-acetyllysine occurs at positions 7 and 39. Residue Lys-150 forms a Glycyl lysine isopeptide (Lys-Gly) (interchain with G-Cter in ubiquitin) linkage.

This sequence belongs to the histone H2B family. In terms of assembly, the nucleosome is a histone octamer containing two molecules each of H2A, H2B, H3 and H4 assembled in one H3-H4 heterotetramer and two H2A-H2B heterodimers. The octamer wraps approximately 147 bp of DNA. In terms of processing, can be acetylated to form H2BK6ac and H2BK33ac. Post-translationally, monoubiquitinated to form H2BK143ub1; may give a specific tag for epigenetic transcriptional activation.

The protein resides in the nucleus. The protein localises to the chromosome. Its function is as follows. Core component of nucleosome. Nucleosomes wrap and compact DNA into chromatin, limiting DNA accessibility to the cellular machineries which require DNA as a template. Histones thereby play a central role in transcription regulation, DNA repair, DNA replication and chromosomal stability. DNA accessibility is regulated via a complex set of post-translational modifications of histones, also called histone code, and nucleosome remodeling. This is Histone H2B.5 from Zea mays (Maize).